The following is a 245-amino-acid chain: Uridylate kinase (245 aa).

ATP is bound at residue 18–21; it reads KLSG. Residue glycine 60 coordinates UMP. ATP is bound by residues glycine 61 and arginine 65. UMP contacts are provided by residues aspartate 80 and 141–148; that span reads TGNPFFTT. The ATP site is built by threonine 168, tyrosine 174, and aspartate 177.

Belongs to the UMP kinase family. Homohexamer.

The protein localises to the cytoplasm. It catalyses the reaction UMP + ATP = UDP + ADP. It functions in the pathway pyrimidine metabolism; CTP biosynthesis via de novo pathway; UDP from UMP (UMPK route): step 1/1. Its activity is regulated as follows. Inhibited by UTP. Catalyzes the reversible phosphorylation of UMP to UDP. This Pseudomonas aeruginosa (strain UCBPP-PA14) protein is Uridylate kinase.